The primary structure comprises 806 residues: MSGWPRIYYKLLNLPLSILVKSKSIPAEPAQELGLDTSRPIMYVLPYNSKADLLTLRAQCLAHDLPDPLEPLEIDGALLPRYVFIHGGPRVFTYYTPKEESVKLFHDYLDLHRSNPALDVQMVPVSVMFGRAPGREKGEDNPPLRMLNGVQKFFAISWLGRDSFVRFSPSVSLRRMADEHGTDKIIAQKLARVARMHFARQRLAAVGPRLPARQDLFNKLLASKAIARAVEDEARSKKISHEKAQQNAIALMEEIAANFSYEMIRLTDRILGFTWNRLYQGINVHNAERVRQLAHDGHEIVYVPCHRSHMDYLLLSYVLYHQGLVPPHIAAGINLNFWPAGPIFRRLGAFFIRRTFKGNKLYSTVFREYLGELFSRGYSVEYFVEGGRSRTGRLLDPKTGTLSMTIQAMLRGGTRPITLVPIYIGYEHVMEVGTYAKELRGATKEKESLPQMLKGLSKLRNLGQGYVNFGEPMPLMTYLNQHVPEWRESIDPIEAIRPAWLTPTVNSIAADLMVRINNAGAANAMNLCCTALLASRQRSLTREQLTEQLDCYLDLMRNVPYSTDSTVPAASAGELIAHALQMNKFEVEKDTIGDIIILPREQAVLMTYYRNNIAHMLIMPSLMAAIITQHRRISRDALQQHVEALYPMLKAELFLRWEREELASVIDALASEIQRQGLITLQDDELHINPTHSRTLQLLAAGARETLQRYAITFWLLSANPSINRSTLEKESRTVAQRLSVLHGINAPEFFDKAVFSSLVLTLRDEGYISDTGDAEPAETMKIYQMLADLITSDVRLTIESATQGE.

The HXXXXD motif motif lies at 305 to 310; that stretch reads CHRSHM.

Belongs to the GPAT/DAPAT family.

The protein localises to the cell inner membrane. It carries out the reaction sn-glycerol 3-phosphate + an acyl-CoA = a 1-acyl-sn-glycero-3-phosphate + CoA. The protein operates within phospholipid metabolism; CDP-diacylglycerol biosynthesis; CDP-diacylglycerol from sn-glycerol 3-phosphate: step 1/3. In Salmonella paratyphi B (strain ATCC BAA-1250 / SPB7), this protein is Glycerol-3-phosphate acyltransferase.